A 266-amino-acid chain; its full sequence is NADP-dependent mannitol dehydrogenase (266 aa).

The NADP(+) site is built by Thr31, Ile33, Asn107, and Arg140. The Proton donor role is filled by Ser159. Tyr174, Lys178, Ile206, and Thr208 together coordinate NADP(+). The Proton acceptor role is filled by Tyr174. Residue Lys178 is the Lowers pKa of active site Tyr of the active site.

The protein belongs to the short-chain dehydrogenases/reductases (SDR) family. Homotetramer.

It is found in the vacuole. The enzyme catalyses D-mannitol + NADP(+) = D-fructose + NADPH + H(+). The sequence is that of NADP-dependent mannitol dehydrogenase from Alternaria alternata (Alternaria rot fungus).